Here is a 1103-residue protein sequence, read N- to C-terminus: Retinal guanylyl cyclase 1 (1103 aa).

An N-terminal signal peptide occupies residues 1 to 51 (MTACARRAGGLPDPGLCGPAWWAPSLPRLPRALPRLPLLLLLLLLQPPALS). Residues 52 to 462 (AVFTVGVLGP…PNNICGGGLE (411 aa)) lie on the Extracellular side of the membrane. N297 is a glycosylation site (N-linked (GlcNAc...) asparagine). A helical transmembrane segment spans residues 463–487 (PGLVFLGFLLVVGMGLAGAFLAHYV). Residues 488–1103 (RHRLLHMQMV…LEKARPGQFS (616 aa)) lie on the Cytoplasmic side of the membrane. Residues 525-808 (QGSRSSLGAR…DHTFDLFKNI (284 aa)) enclose the Protein kinase domain. The region spanning 880-1010 (TLYFSDIVGF…DTVNTASRME (131 aa)) is the Guanylate cyclase domain. Residues 1065 to 1103 (PIPKPPDLQPGSSNHGISLQEIPPERRRKLEKARPGQFS) are disordered.

Belongs to the adenylyl cyclase class-4/guanylyl cyclase family. As to quaternary structure, homodimer; requires homodimerization for guanylyl cyclase activity. Interacts with RD3; promotes the exit of GUCY2D from the endoplasmic reticulum and its trafficking to the photoreceptor outer segments. Interaction with RD3 negatively regulates guanylate cyclase activity. Retina.

It localises to the photoreceptor outer segment membrane. It is found in the endoplasmic reticulum membrane. The catalysed reaction is GTP = 3',5'-cyclic GMP + diphosphate. Its activity is regulated as follows. Activated by GUCA1A when free calcium ions concentration is low, and inhibited by GUCA1A when free calcium ions concentration is high. Negatively regulated by RD3; inhibits the basal and GUCA1A-stimulated guanylate cyclase activity. Catalyzes the synthesis of cyclic GMP (cGMP) in rods and cones of photoreceptors. Plays an essential role in phototransduction, by mediating cGMP replenishment. May also participate in the trafficking of membrane-asociated proteins to the photoreceptor outer segment membrane. This is Retinal guanylyl cyclase 1 (GUCY2D) from Homo sapiens (Human).